Consider the following 104-residue polypeptide: Large ribosomal subunit protein uL24 (104 aa).

The protein belongs to the universal ribosomal protein uL24 family. As to quaternary structure, part of the 50S ribosomal subunit.

Functionally, one of two assembly initiator proteins, it binds directly to the 5'-end of the 23S rRNA, where it nucleates assembly of the 50S subunit. One of the proteins that surrounds the polypeptide exit tunnel on the outside of the subunit. This is Large ribosomal subunit protein uL24 from Afipia carboxidovorans (strain ATCC 49405 / DSM 1227 / KCTC 32145 / OM5) (Oligotropha carboxidovorans).